Here is a 145-residue protein sequence, read N- to C-terminus: Bacilliredoxin SERP1075 (145 aa).

This sequence belongs to the bacilliredoxin family.

This is Bacilliredoxin SERP1075 from Staphylococcus epidermidis (strain ATCC 35984 / DSM 28319 / BCRC 17069 / CCUG 31568 / BM 3577 / RP62A).